Here is a 340-residue protein sequence, read N- to C-terminus: S-adenosylmethionine:tRNA ribosyltransferase-isomerase (340 aa).

This sequence belongs to the QueA family. As to quaternary structure, monomer.

It localises to the cytoplasm. The enzyme catalyses 7-aminomethyl-7-carbaguanosine(34) in tRNA + S-adenosyl-L-methionine = epoxyqueuosine(34) in tRNA + adenine + L-methionine + 2 H(+). The protein operates within tRNA modification; tRNA-queuosine biosynthesis. Transfers and isomerizes the ribose moiety from AdoMet to the 7-aminomethyl group of 7-deazaguanine (preQ1-tRNA) to give epoxyqueuosine (oQ-tRNA). This Nitratiruptor sp. (strain SB155-2) protein is S-adenosylmethionine:tRNA ribosyltransferase-isomerase.